The chain runs to 204 residues: Guanylate kinase (204 aa).

A Guanylate kinase-like domain is found at 18-196 (PKLFTISAPA…SYEVLKSIFI (179 aa)). 25–32 (APAGAGKT) contacts ATP.

This sequence belongs to the guanylate kinase family.

The protein resides in the cytoplasm. The catalysed reaction is GMP + ATP = GDP + ADP. Its function is as follows. Essential for recycling GMP and indirectly, cGMP. This is Guanylate kinase from Chlamydia abortus (strain DSM 27085 / S26/3) (Chlamydophila abortus).